We begin with the raw amino-acid sequence, 624 residues long: Penicillin-binding protein 4 (624 aa).

A signal peptide spans 1 to 21; it reads MTMLRKIIGWILLLCIIPLFA. Glu-96 serves as the catalytic Proton donor; for transglycosylase activity. Ser-388 serves as the catalytic Acyl-ester intermediate; for transpeptidase activity.

The protein in the N-terminal section; belongs to the glycosyltransferase 51 family. In the C-terminal section; belongs to the transpeptidase family. The N-terminus is blocked.

Its subcellular location is the cell membrane. The enzyme catalyses [GlcNAc-(1-&gt;4)-Mur2Ac(oyl-L-Ala-gamma-D-Glu-L-Lys-D-Ala-D-Ala)](n)-di-trans,octa-cis-undecaprenyl diphosphate + beta-D-GlcNAc-(1-&gt;4)-Mur2Ac(oyl-L-Ala-gamma-D-Glu-L-Lys-D-Ala-D-Ala)-di-trans,octa-cis-undecaprenyl diphosphate = [GlcNAc-(1-&gt;4)-Mur2Ac(oyl-L-Ala-gamma-D-Glu-L-Lys-D-Ala-D-Ala)](n+1)-di-trans,octa-cis-undecaprenyl diphosphate + di-trans,octa-cis-undecaprenyl diphosphate + H(+). It carries out the reaction Preferential cleavage: (Ac)2-L-Lys-D-Ala-|-D-Ala. Also transpeptidation of peptidyl-alanyl moieties that are N-acyl substituents of D-alanine.. Cell wall formation. Synthesis of cross-linked peptidoglycan from the lipid intermediates. The enzyme has a penicillin-insensitive transglycosylase N-terminal domain (formation of linear glycan strands) and a penicillin-sensitive transpeptidase C-terminal domain (cross-linking of the peptide subunits). Has a partially redundant function with PBP-2A (pbpA) during spore outgrowth. This Bacillus subtilis (strain 168) protein is Penicillin-binding protein 4.